The sequence spans 226 residues: Urease accessory protein UreF (226 aa).

It belongs to the UreF family. As to quaternary structure, ureD, UreF and UreG form a complex that acts as a GTP-hydrolysis-dependent molecular chaperone, activating the urease apoprotein by helping to assemble the nickel containing metallocenter of UreC. The UreE protein probably delivers the nickel.

The protein localises to the cytoplasm. Required for maturation of urease via the functional incorporation of the urease nickel metallocenter. The sequence is that of Urease accessory protein UreF from Nitrosospira multiformis (strain ATCC 25196 / NCIMB 11849 / C 71).